The chain runs to 206 residues: Holliday junction branch migration complex subunit RuvA (206 aa).

A domain I region spans residues Met1–Ile64. The domain II stretch occupies residues Asp65–Ala142. Positions Thr143 to Pro154 are flexible linker. A domain III region spans residues Ser155–Ala206.

The protein belongs to the RuvA family. As to quaternary structure, homotetramer. Forms an RuvA(8)-RuvB(12)-Holliday junction (HJ) complex. HJ DNA is sandwiched between 2 RuvA tetramers; dsDNA enters through RuvA and exits via RuvB. An RuvB hexamer assembles on each DNA strand where it exits the tetramer. Each RuvB hexamer is contacted by two RuvA subunits (via domain III) on 2 adjacent RuvB subunits; this complex drives branch migration. In the full resolvosome a probable DNA-RuvA(4)-RuvB(12)-RuvC(2) complex forms which resolves the HJ.

Its subcellular location is the cytoplasm. Its function is as follows. The RuvA-RuvB-RuvC complex processes Holliday junction (HJ) DNA during genetic recombination and DNA repair, while the RuvA-RuvB complex plays an important role in the rescue of blocked DNA replication forks via replication fork reversal (RFR). RuvA specifically binds to HJ cruciform DNA, conferring on it an open structure. The RuvB hexamer acts as an ATP-dependent pump, pulling dsDNA into and through the RuvAB complex. HJ branch migration allows RuvC to scan DNA until it finds its consensus sequence, where it cleaves and resolves the cruciform DNA. This is Holliday junction branch migration complex subunit RuvA from Teredinibacter turnerae (strain ATCC 39867 / T7901).